We begin with the raw amino-acid sequence, 323 residues long: Ribonuclease Z (323 aa).

7 residues coordinate Zn(2+): histidine 62, histidine 64, aspartate 66, histidine 67, histidine 140, aspartate 211, and histidine 270. The Proton acceptor role is filled by aspartate 66.

It belongs to the RNase Z family. Homodimer. Requires Zn(2+) as cofactor.

It catalyses the reaction Endonucleolytic cleavage of RNA, removing extra 3' nucleotides from tRNA precursor, generating 3' termini of tRNAs. A 3'-hydroxy group is left at the tRNA terminus and a 5'-phosphoryl group is left at the trailer molecule.. Zinc phosphodiesterase, which displays some tRNA 3'-processing endonuclease activity. Probably involved in tRNA maturation, by removing a 3'-trailer from precursor tRNA. The chain is Ribonuclease Z from Marinobacter nauticus (strain ATCC 700491 / DSM 11845 / VT8) (Marinobacter aquaeolei).